The chain runs to 408 residues: Aminopeptidase T (408 aa).

A divalent metal cation-binding residues include Glu-250, Glu-316, Glu-340, His-345, His-376, and Asp-378.

It belongs to the peptidase M29 family. In terms of assembly, homodimer. Co(2+) serves as cofactor. Zn(2+) is required as a cofactor. The cofactor is Mg(2+).

In terms of biological role, metal-dependent exopeptidase. This chain is Aminopeptidase T, found in Thermus thermophilus (strain ATCC 27634 / DSM 579 / HB8).